Consider the following 163-residue polypeptide: N5-carboxyaminoimidazole ribonucleotide mutase (163 aa).

Substrate contacts are provided by Ser11, Asp14, and Arg41.

It belongs to the AIR carboxylase family. Class I subfamily.

The enzyme catalyses 5-carboxyamino-1-(5-phospho-D-ribosyl)imidazole + H(+) = 5-amino-1-(5-phospho-D-ribosyl)imidazole-4-carboxylate. Its pathway is purine metabolism; IMP biosynthesis via de novo pathway; 5-amino-1-(5-phospho-D-ribosyl)imidazole-4-carboxylate from 5-amino-1-(5-phospho-D-ribosyl)imidazole (N5-CAIR route): step 2/2. Its function is as follows. Catalyzes the conversion of N5-carboxyaminoimidazole ribonucleotide (N5-CAIR) to 4-carboxy-5-aminoimidazole ribonucleotide (CAIR). The sequence is that of N5-carboxyaminoimidazole ribonucleotide mutase from Pseudomonas aeruginosa (strain ATCC 15692 / DSM 22644 / CIP 104116 / JCM 14847 / LMG 12228 / 1C / PRS 101 / PAO1).